We begin with the raw amino-acid sequence, 299 residues long: J domain-containing protein CG6693 (299 aa).

One can recognise a J domain in the interval 15–82 (DVYKLMELAR…QKRALYDEQG (68 aa)). At S239 the chain carries Phosphoserine. Residues 266–299 (FEKKKKKSKKPAAKQETKPKLNGVKAGRVEKGKN) are disordered. The segment covering 268-277 (KKKKKSKKPA) has biased composition (basic residues).

In Drosophila melanogaster (Fruit fly), this protein is J domain-containing protein CG6693.